We begin with the raw amino-acid sequence, 110 residues long: Large ribosomal subunit protein uL22 (110 aa).

The protein belongs to the universal ribosomal protein uL22 family. In terms of assembly, part of the 50S ribosomal subunit.

In terms of biological role, this protein binds specifically to 23S rRNA; its binding is stimulated by other ribosomal proteins, e.g. L4, L17, and L20. It is important during the early stages of 50S assembly. It makes multiple contacts with different domains of the 23S rRNA in the assembled 50S subunit and ribosome. Functionally, the globular domain of the protein is located near the polypeptide exit tunnel on the outside of the subunit, while an extended beta-hairpin is found that lines the wall of the exit tunnel in the center of the 70S ribosome. This Ruthia magnifica subsp. Calyptogena magnifica protein is Large ribosomal subunit protein uL22.